A 118-amino-acid chain; its full sequence is Co-chaperonin GroES (118 aa).

Belongs to the GroES chaperonin family. Heptamer of 7 subunits arranged in a ring. Interacts with the chaperonin GroEL.

It is found in the cytoplasm. Functionally, together with the chaperonin GroEL, plays an essential role in assisting protein folding. The GroEL-GroES system forms a nano-cage that allows encapsulation of the non-native substrate proteins and provides a physical environment optimized to promote and accelerate protein folding. GroES binds to the apical surface of the GroEL ring, thereby capping the opening of the GroEL channel. This Helicobacter acinonychis (strain Sheeba) protein is Co-chaperonin GroES.